A 101-amino-acid polypeptide reads, in one-letter code: Large ribosomal subunit protein uL24 (101 aa).

This sequence belongs to the universal ribosomal protein uL24 family. As to quaternary structure, part of the 50S ribosomal subunit.

One of two assembly initiator proteins, it binds directly to the 5'-end of the 23S rRNA, where it nucleates assembly of the 50S subunit. Functionally, one of the proteins that surrounds the polypeptide exit tunnel on the outside of the subunit. The chain is Large ribosomal subunit protein uL24 from Streptococcus pyogenes serotype M2 (strain MGAS10270).